We begin with the raw amino-acid sequence, 106 residues long: ATP-dependent Clp protease adapter protein ClpS (106 aa).

Residues 1–10 are compositionally biased toward basic and acidic residues; it reads MSQKTVHDQD. A disordered region spans residues 1-23; that stretch reads MSQKTVHDQDNALLLETGNTKVA.

The protein belongs to the ClpS family. As to quaternary structure, binds to the N-terminal domain of the chaperone ClpA.

Its function is as follows. Involved in the modulation of the specificity of the ClpAP-mediated ATP-dependent protein degradation. This Xylella fastidiosa (strain M23) protein is ATP-dependent Clp protease adapter protein ClpS.